The following is a 66-amino-acid chain: Large ribosomal subunit protein uL29 (66 aa).

It belongs to the universal ribosomal protein uL29 family.

The protein is Large ribosomal subunit protein uL29 of Borrelia hermsii (strain HS1 / DAH).